A 158-amino-acid chain; its full sequence is Endoribonuclease YbeY (158 aa).

3 residues coordinate Zn(2+): His124, His128, and His134.

Belongs to the endoribonuclease YbeY family. It depends on Zn(2+) as a cofactor.

Its subcellular location is the cytoplasm. Functionally, single strand-specific metallo-endoribonuclease involved in late-stage 70S ribosome quality control and in maturation of the 3' terminus of the 16S rRNA. The protein is Endoribonuclease YbeY of Latilactobacillus sakei subsp. sakei (strain 23K) (Lactobacillus sakei subsp. sakei).